Here is a 396-residue protein sequence, read N- to C-terminus: Elongation factor Tu (396 aa).

One can recognise a tr-type G domain in the interval 10–205 (KPHVNIGTIG…ACDDNIPDPV (196 aa)). Residues 19–26 (GHVDHGKT) are G1. GTP is bound at residue 19–26 (GHVDHGKT). Thr26 lines the Mg(2+) pocket. The segment at 62–66 (GITIN) is G2. Positions 83–86 (DAPG) are G3. GTP contacts are provided by residues 83 to 87 (DAPGH) and 138 to 141 (NKCD). The G4 stretch occupies residues 138 to 141 (NKCD). Residues 175 to 177 (SAL) form a G5 region.

It belongs to the TRAFAC class translation factor GTPase superfamily. Classic translation factor GTPase family. EF-Tu/EF-1A subfamily. Monomer.

It is found in the cytoplasm. It carries out the reaction GTP + H2O = GDP + phosphate + H(+). In terms of biological role, GTP hydrolase that promotes the GTP-dependent binding of aminoacyl-tRNA to the A-site of ribosomes during protein biosynthesis. The polypeptide is Elongation factor Tu (Corynebacterium glutamicum (strain R)).